Here is a 161-residue protein sequence, read N- to C-terminus: Serine-protein kinase RsbW (161 aa).

The protein belongs to the anti-sigma-factor family.

The catalysed reaction is L-seryl-[protein] + ATP = O-phospho-L-seryl-[protein] + ADP + H(+). It catalyses the reaction L-threonyl-[protein] + ATP = O-phospho-L-threonyl-[protein] + ADP + H(+). Functionally, negative regulator of sigma-B activity. Phosphorylates and inactivates its specific antagonist protein, RsbV. Upon phosphorylation of RsbV, RsbW is released and binds to sigma-B, thereby blocking its ability to form an RNA polymerase holoenzyme (E-sigma-B). The protein is Serine-protein kinase RsbW of Bacillus licheniformis (strain ATCC 14580 / DSM 13 / JCM 2505 / CCUG 7422 / NBRC 12200 / NCIMB 9375 / NCTC 10341 / NRRL NRS-1264 / Gibson 46).